The sequence spans 286 residues: Interferon-induced 35 kDa protein (286 aa).

The segment at leucine 5 to leucine 26 is leucine-zipper. NID domains follow at residues alanine 81–aspartate 170 and phenylalanine 183–glutamate 266.

Belongs to the NMI family. In terms of assembly, homodimer. Also interacts with BATF. Interacts with TRIM21. Interacts with NMI; the interaction is direct and is facilitated by TRIM21. Phosphorylated. Dephosphorylation correlates with the formation of a complex with NMI. Expressed in a wide range of cell types, including fibroblasts, macrophages, and epithelial cells.

It is found in the cytoplasm. It localises to the nucleus. Its subcellular location is the secreted. In terms of biological role, acts as a signaling pathway regulator involved in innate immune system response. In response to interferon IFN-alpha, associates in a complex with signaling pathway regulator NMI to regulate immune response; the complex formation prevents proteasome-mediated degradation of IFI35 and correlates with IFI35 dephosphorylation. In complex with NMI, inhibits virus-triggered type I interferon/IFN-beta production. In complex with NMI, negatively regulates nuclear factor NF-kappa-B signaling by inhibiting the nuclear translocation, activation and transcription of the NF-kappa-B subunit p65/RELA, resulting in the inhibition of endothelial cell proliferation, migration and re-endothelialization of injured arteries. Beside its role as an intracellular signaling pathway regulator, also functions extracellularly as damage-associated molecular patterns (DAMPs) to promote inflammation when actively released by macrophage to the extracellular space during cell injury and pathogen invasion. Macrophage-secreted IFI35 activates NF-kappa-B signaling in adjacent macrophages through Toll-like receptor 4/TLR4 activation, thereby inducing NF-kappa-B translocation from the cytoplasm into the nucleus which promotes the release of pro-inflammatory cytokines. In Homo sapiens (Human), this protein is Interferon-induced 35 kDa protein.